We begin with the raw amino-acid sequence, 701 residues long: MNSLFASTARGLEELLKTELEGLGATDCQVVQGGVHFQGDTRLLYQSLMWSRLASRIMLPLGECRVYSDLDLYLGVQAIPWTEMFNPGATFAVHFSGLNDEIRNSQYGALKVKDAIVDSFTRKNLPRPNVDRESPDLRINVWLNKETAHISLDLSGEGLHLRGYRDGTGMAPIKENLAAAIVMRSGWVPGTPLLDPMCGSGTLLIEAAMLATDRAPGLHRGHWGFGGWAQHDDAIWKEVKAEAQTRARQGLAAYGSRFYGSDVDERVIERARRNARRAGIGELIDFAVKDVAQLNNPLPKGPYGTVISNPPYGERLESEPALIALHSLLGRIMKSQFGGWNLSVFSASPELLSCLQLRADKQFKAKNGPLDCIQKNYHLAESEGGKPAMLAEDFANRLRKNLKKFEKWARQEGIECYRLYDADLPEYNVAIDRYGDWVVVQEYAPPKTVDAHKARQRLFDIIAATIAVLEIAPNKLVLKTRERQKGKNQYQKMAEKGDFIEVQEYNARLWVNLTDYLDTGLFLDHRIARRMLGQMSKGKDFLNLFSYTGSASVHAGLGGARSTTTVDMSRTYLEWAERNLRLNGLTGRAHRLMQADVLGWLRESTEQFDLIFIDPPTFSNSKRMEDAFDVQRDHIRLMTDLKRLLRKGGTIMFSNNKRGFRMDHDGLAALGLKAQEISQKTLSQDFARNRQIHNCWLITAA.

Positions 43–154 (LLYQSLMWSR…KETAHISLDL (112 aa)) constitute a THUMP domain.

This sequence belongs to the methyltransferase superfamily. RlmKL family.

Its subcellular location is the cytoplasm. It catalyses the reaction guanosine(2445) in 23S rRNA + S-adenosyl-L-methionine = N(2)-methylguanosine(2445) in 23S rRNA + S-adenosyl-L-homocysteine + H(+). It carries out the reaction guanosine(2069) in 23S rRNA + S-adenosyl-L-methionine = N(2)-methylguanosine(2069) in 23S rRNA + S-adenosyl-L-homocysteine + H(+). Functionally, specifically methylates the guanine in position 2445 (m2G2445) and the guanine in position 2069 (m7G2069) of 23S rRNA. The chain is Ribosomal RNA large subunit methyltransferase K/L from Klebsiella pneumoniae (strain 342).